Reading from the N-terminus, the 618-residue chain is Chaperone protein dnaK (618 aa).

A disordered region spans residues 595–618; the sequence is SKTETTTPNKNEEDVIDASFSEEK.

Belongs to the heat shock protein 70 family.

The protein resides in the plastid. It is found in the cyanelle. Functionally, acts as a chaperone. The polypeptide is Chaperone protein dnaK (dnaK-A) (Cyanophora paradoxa).